Reading from the N-terminus, the 237-residue chain is Sugar fermentation stimulation protein homolog (237 aa).

It belongs to the SfsA family.

The chain is Sugar fermentation stimulation protein homolog from Pseudomonas syringae pv. syringae (strain B728a).